The primary structure comprises 51 residues: Large ribosomal subunit protein eL39 (51 aa).

This sequence belongs to the eukaryotic ribosomal protein eL39 family.

In Pyrococcus abyssi (strain GE5 / Orsay), this protein is Large ribosomal subunit protein eL39 (rpl39e).